A 142-amino-acid polypeptide reads, in one-letter code: Large ribosomal subunit protein uL11 (142 aa).

The protein belongs to the universal ribosomal protein uL11 family. As to quaternary structure, part of the ribosomal stalk of the 50S ribosomal subunit. Interacts with L10 and the large rRNA to form the base of the stalk. L10 forms an elongated spine to which L12 dimers bind in a sequential fashion forming a multimeric L10(L12)X complex. One or more lysine residues are methylated.

Functionally, forms part of the ribosomal stalk which helps the ribosome interact with GTP-bound translation factors. This is Large ribosomal subunit protein uL11 from Proteus vulgaris.